Reading from the N-terminus, the 491-residue chain is UDP-N-acetylmuramate--L-alanine ligase (491 aa).

126–132 (GTHGKTT) is a binding site for ATP.

The protein belongs to the MurCDEF family.

Its subcellular location is the cytoplasm. The catalysed reaction is UDP-N-acetyl-alpha-D-muramate + L-alanine + ATP = UDP-N-acetyl-alpha-D-muramoyl-L-alanine + ADP + phosphate + H(+). Its pathway is cell wall biogenesis; peptidoglycan biosynthesis. Functionally, cell wall formation. This Shigella flexneri serotype 5b (strain 8401) protein is UDP-N-acetylmuramate--L-alanine ligase.